The sequence spans 473 residues: Ribulose bisphosphate carboxylase large chain (473 aa).

The propeptide occupies 1–2 (MS). Pro3 bears the N-acetylproline mark. Lys14 carries the N6,N6,N6-trimethyllysine modification. Substrate contacts are provided by Asn123 and Thr173. Catalysis depends on Lys175, which acts as the Proton acceptor. Lys177 lines the substrate pocket. Residues Lys201, Asp203, and Glu204 each coordinate Mg(2+). An N6-carboxylysine modification is found at Lys201. The Proton acceptor role is filled by His294. Residues Arg295, His327, and Ser379 each contribute to the substrate site.

This sequence belongs to the RuBisCO large chain family. Type I subfamily. As to quaternary structure, heterohexadecamer of 8 large chains and 8 small chains; disulfide-linked. The disulfide link is formed within the large subunit homodimers. Requires Mg(2+) as cofactor. In terms of processing, the disulfide bond which can form in the large chain dimeric partners within the hexadecamer appears to be associated with oxidative stress and protein turnover.

It localises to the plastid. It is found in the chloroplast. It catalyses the reaction 2 (2R)-3-phosphoglycerate + 2 H(+) = D-ribulose 1,5-bisphosphate + CO2 + H2O. It carries out the reaction D-ribulose 1,5-bisphosphate + O2 = 2-phosphoglycolate + (2R)-3-phosphoglycerate + 2 H(+). Functionally, ruBisCO catalyzes two reactions: the carboxylation of D-ribulose 1,5-bisphosphate, the primary event in carbon dioxide fixation, as well as the oxidative fragmentation of the pentose substrate in the photorespiration process. Both reactions occur simultaneously and in competition at the same active site. This is Ribulose bisphosphate carboxylase large chain from Sesbania sesban (Egyptian riverhemp).